The following is a 627-amino-acid chain: (-)-beta-pinene synthase 2, chloroplastic (627 aa).

The transit peptide at 1 to 51 directs the protein to the chloroplast; sequence MDLISVLPSASKSCVCLHKPLSSSTHKLKPFCRKIRILGMPRPRKSVLMVS. Mg(2+) is bound by residues Asp-378, Asp-382, and Asp-530. Positions 378–382 match the DDXXD motif motif; the sequence is DDMYD.

It belongs to the terpene synthase family. Tpsd subfamily. Mg(2+) is required as a cofactor. Mn(2+) serves as cofactor.

The protein localises to the plastid. It localises to the chloroplast. It carries out the reaction (2E)-geranyl diphosphate = (1S,5S)-beta-pinene + diphosphate. It catalyses the reaction (2E)-geranyl diphosphate = (1S,5S)-alpha-pinene + diphosphate. Its pathway is terpene metabolism; oleoresin biosynthesis. The protein operates within secondary metabolite biosynthesis; terpenoid biosynthesis. Monoterpene synthase (TPS) involved in the biosynthesis of monoterpene natural products included in conifer oleoresin secretions and volatile emissions; these compounds contribute to biotic and abiotic stress defense against herbivores and pathogens. Catalyzes the conversion of (2E)-geranyl diphosphate (GPP) to (-)-beta-pinene and, to a lower extent, to (-)-alpha-pinene. The chain is (-)-beta-pinene synthase 2, chloroplastic from Pinus banksiana (Jack pine).